Reading from the N-terminus, the 202-residue chain is Coiled-coil domain-containing protein 69 (202 aa).

The span at 1–11 (MGCRQSRHSRG) shows a compositional bias: basic residues. Disordered stretches follow at residues 1-20 (MGCRQSRHSRGKRAEKVEET) and 32-52 (GRILEGRHEEAGQVPQTSNAQ). A lipid anchor (N-myristoyl glycine) is attached at Gly-2. Over residues 32-42 (GRILEGRHEEA) the composition is skewed to basic and acidic residues. A Phosphoserine modification is found at Ser-92. Residues 112 to 146 (WEQELESLHHVIEMKNERIHELEKQLFLLEMLKEK) are a coiled coil.

This sequence belongs to the CCDC69 family.

Its subcellular location is the cytoplasm. The protein localises to the cytoskeleton. It localises to the spindle. It is found in the midbody. Its function is as follows. May act as a scaffold to regulate the recruitment and assembly of spindle midzone components. Required for the localization of AURKB and PLK1 to the spindle midzone. The protein is Coiled-coil domain-containing protein 69 (Ccdc69) of Mus musculus (Mouse).